The following is a 270-amino-acid chain: Interleukin-33 (270 aa).

The tract at residues 1–65 (MKPKMKYSTN…EACYFRRETT (65 aa)) is homeodomain-like HTH domain. A propeptide spanning residues 1 to 94 (MKPKMKYSTN…CQQQSTVESF (94 aa)) is cleaved from the precursor. Residues 64–111 (TTKRPSLKTDRKHKRHLVLAACQQQSTVESFAFGISGVQKYTRALHDS) form an interaction with RELA region.

Belongs to the IL-1 family. Highly divergent. Forms a 1:1:1 heterotrimeric complex with its primary high-affinity receptor IL1RL1 and the coreceptor IL1RAP. Interacts with cargo receptor TMED10; the interaction mediates the translocation from the cytoplasm into the ERGIC (endoplasmic reticulum-Golgi intermediate compartment) and thereby secretion. Post-translationally, the full-length protein can be released from cells and is able to signal via the IL1RL1/ST2 receptor. However, proteolytic processing by CELA1, CSTG/cathepsin G and ELANE/neutrophil elastase produces C-terminal peptides that are more active than the unprocessed full-length protein. May also be proteolytically processed by calpains. Proteolytic cleavage mediated by apoptotic caspases including CASP3 and CASP7 results in IL33 inactivation. In vitro proteolytic cleavage by CASP1 was reported but could not be confirmed in vivo suggesting that IL33 is probably not a direct substrate for that caspase.

The protein resides in the nucleus. It localises to the chromosome. It is found in the cytoplasm. The protein localises to the cytoplasmic vesicle. Its subcellular location is the secretory vesicle. The protein resides in the secreted. Cytokine that binds to and signals through the IL1RL1/ST2 receptor which in turn activates NF-kappa-B and MAPK signaling pathways in target cells. Involved in the maturation of Th2 cells inducing the secretion of T-helper type 2-associated cytokines. Also involved in activation of mast cells, basophils, eosinophils and natural killer cells. Acts as a chemoattractant for Th2 cells, and may function as an 'alarmin', that amplifies immune responses during tissue injury. Induces rapid UCP2-dependent mitochondrial rewiring that attenuates the generation of reactive oxygen species and preserves the integrity of Krebs cycle required for persistent production of itaconate and subsequent GATA3-dependent differentiation of inflammation-resolving alternatively activated macrophages. Its function is as follows. In quiescent endothelia the uncleaved form is constitutively and abundantly expressed, and acts as a chromatin-associated nuclear factor with transcriptional repressor properties, it may sequester nuclear NF-kappaB/RELA, lowering expression of its targets. This form is rapidely lost upon angiogenic or pro-inflammatory activation. The sequence is that of Interleukin-33 (IL33) from Pongo abelii (Sumatran orangutan).